A 322-amino-acid chain; its full sequence is Pantothenate kinase (322 aa).

100 to 107 contributes to the ATP binding site; it reads GSVAVGKS.

This sequence belongs to the prokaryotic pantothenate kinase family.

It is found in the cytoplasm. It carries out the reaction (R)-pantothenate + ATP = (R)-4'-phosphopantothenate + ADP + H(+). Its pathway is cofactor biosynthesis; coenzyme A biosynthesis; CoA from (R)-pantothenate: step 1/5. The chain is Pantothenate kinase from Brucella abortus (strain 2308).